Here is a 283-residue protein sequence, read N- to C-terminus: Transmembrane protein 119 (283 aa).

The first 25 residues, Met-1 to Ala-25, serve as a signal peptide directing secretion. Residues Arg-26–Met-96 lie on the Extracellular side of the membrane. A glycan (O-linked (Xyl...) (chondroitin sulfate) serine) is linked at Ser-41. A compositionally biased stretch (low complexity) spans Glu-43–Pro-52. The interval Glu-43 to Gly-76 is disordered. Residues Leu-97–Ile-117 traverse the membrane as a helical segment. At Thr-118–Val-283 the chain is on the cytoplasmic side. Disordered stretches follow at residues Lys-136–Ser-168 and Leu-183–Val-283. Basic and acidic residues-rich tracts occupy residues Val-153 to Glu-164 and Arg-198 to Gln-213. The span at Gly-238–Gln-264 shows a compositional bias: low complexity. Ser-272 is subject to Phosphoserine.

In terms of assembly, interacts with SMAD1, SMAD5 and RUNX2. Expressed in brain microglia (at protein level). Detected in urine (at protein level). Elevated expression levels seen in the brain of patients with Alzheimer disease. Expressed by osteoblast-like cells in bone tissues and follicular dendritic cells in lymphoid tissues.

Its subcellular location is the cell membrane. It localises to the cytoplasm. The protein resides in the endoplasmic reticulum membrane. It is found in the secreted. Functionally, plays an important role in bone formation and normal bone mineralization. Promotes the differentiation of myoblasts into osteoblasts. May induce the commitment and differentiation of myoblasts into osteoblasts through an enhancement of BMP2 production and interaction with the BMP-RUNX2 pathway. Up-regulates the expression of ATF4, a transcription factor which plays a central role in osteoblast differentiation. Essential for normal spermatogenesis and late testicular differentiation. The chain is Transmembrane protein 119 (TMEM119) from Homo sapiens (Human).